The sequence spans 466 residues: Asparagine--tRNA ligase (466 aa).

Belongs to the class-II aminoacyl-tRNA synthetase family. In terms of assembly, homodimer.

It localises to the cytoplasm. The catalysed reaction is tRNA(Asn) + L-asparagine + ATP = L-asparaginyl-tRNA(Asn) + AMP + diphosphate + H(+). The chain is Asparagine--tRNA ligase from Salmonella choleraesuis (strain SC-B67).